The primary structure comprises 323 residues: Conjugal transfer protein TrbB (323 aa).

An ATP-binding site is contributed by 151–158 (GGTGSGKT).

This sequence belongs to the GSP E family.

Its subcellular location is the cytoplasm. In Rhizobium radiobacter (Agrobacterium tumefaciens), this protein is Conjugal transfer protein TrbB (trbB).